A 341-amino-acid chain; its full sequence is MSKANVGINGFGRIGRLVLRAAVEKDTVQVVAVNDPFITIDYMVYLFKYDSTHGQFKGTVTYDGDFLIVQKDGKSSHKIKVFNSKDPAAIAWGSVKADFVVESTGVFTTKEKASAHLQGGAKKVIISAPSADAPMYVVGVNHEKYDASNDHVISNASCTTNCLAPLAKVINDNFGIIEGLMTTVHAVTATQKTVDGPSGKLWRDGRGAGQNIIPASTGAAKAVGKVIPELNGKLTGMAFRVPTPDVSVVDLTVRLEKPASMDDIKKVVKAAADGPMKGILAYTEDQVVSTDFVSDPHSSIFDTGACISLNPNFVKLVSWYDNEYGYSNRVVDLIGYIATRG.

NAD(+) is bound by residues Arg13–Ile14, Asp35, and Lys85. Residues Ser157–Thr159, Thr188, Thr217–Gly218, and Arg240 contribute to the D-glyceraldehyde 3-phosphate site. The active-site Nucleophile is the Cys158. An NAD(+)-binding site is contributed by Asn322.

This sequence belongs to the glyceraldehyde-3-phosphate dehydrogenase family. As to quaternary structure, homotetramer.

The protein localises to the cytoplasm. It catalyses the reaction D-glyceraldehyde 3-phosphate + phosphate + NAD(+) = (2R)-3-phospho-glyceroyl phosphate + NADH + H(+). Its pathway is carbohydrate degradation; glycolysis; pyruvate from D-glyceraldehyde 3-phosphate: step 1/5. The sequence is that of Glyceraldehyde-3-phosphate dehydrogenase 4 (gpd-4) from Caenorhabditis elegans.